Reading from the N-terminus, the 212-residue chain is Thymidylate kinase (212 aa).

Gly-10 to Thr-17 contributes to the ATP binding site.

This sequence belongs to the thymidylate kinase family.

It catalyses the reaction dTMP + ATP = dTDP + ADP. In terms of biological role, phosphorylation of dTMP to form dTDP in both de novo and salvage pathways of dTTP synthesis. This Bacillus pumilus (strain SAFR-032) protein is Thymidylate kinase.